A 217-amino-acid polypeptide reads, in one-letter code: Coiled-coil domain-containing protein 124-B (217 aa).

The interval 1 to 123 (MPKKFQSENT…EKPKTHLEIP (123 aa)) is disordered. Basic and acidic residues-rich tracts occupy residues 18–45 (RKAE…DDKH), 52–74 (RKEE…QRLL), and 98–123 (QIEE…LEIP). Positions 41 to 83 (DDDKHVVRKEHRKEEKEKKRLELLERKKESQRLLDEEDSKMKG) form a coiled coil.

It belongs to the CCDC124 family. In terms of assembly, associates with translationally inactive ribosomes in the nonrotated state.

The protein resides in the cytoplasm. It is found in the cytoskeleton. It localises to the microtubule organizing center. Its subcellular location is the centrosome. The protein localises to the midbody. Functionally, ribosome-binding protein involved in ribosome hibernation: associates with translationally inactive ribosomes and stabilizes the nonrotated conformation of the 80S ribosome, thereby promoting ribosome preservation and storage. This chain is Coiled-coil domain-containing protein 124-B (ccdc124-b), found in Xenopus laevis (African clawed frog).